The sequence spans 184 residues: Photosystem I assembly protein Ycf4 (184 aa).

2 helical membrane-spanning segments follow: residues 22–42 (FGWA…GASS) and 57–77 (IVFF…LFIS).

This sequence belongs to the Ycf4 family.

The protein resides in the plastid. It is found in the chloroplast thylakoid membrane. Seems to be required for the assembly of the photosystem I complex. The polypeptide is Photosystem I assembly protein Ycf4 (Acorus calamus (Sweet flag)).